We begin with the raw amino-acid sequence, 1367 residues long: Paired amphipathic helix protein Sin3-like 2 (1367 aa).

The segment at 14–44 is disordered; the sequence is QFKRPLGSSRGESYEQSPITGGGSIGEGGIN. A compositionally biased stretch (gly residues) spans 33 to 42; that stretch reads TGGGSIGEGG. 2 consecutive PAH domains span residues 46–116 and 130–200; these read QKLT…LPKG and KTVE…LPDS. Residues 212–322 are disordered; it reads SQAQRYDDRG…EAYSGPASHS (111 aa). 2 stretches are compositionally biased toward basic and acidic residues: residues 230–286 and 299–311; these read MFME…SRDL and FSEK…RMEG. The region spanning 327 to 396 is the PAH 3 domain; the sequence is LKSMYNQAFL…DEFNQFFERC (70 aa). Disordered stretches follow at residues 417-446, 786-883, 912-946, and 958-1031; these read EENL…KERS, DVHA…LSKP, QSDT…DSED, and ATAK…EGME. 2 stretches are compositionally biased toward basic and acidic residues: residues 424 to 446 and 806 to 819; these read VKGE…KERS and SSGK…DLAN. Polar residues-rich tracts occupy residues 851-876 and 912-923; these read ATSS…SSGS and QSDTSKANSNYD. Over residues 958 to 967 the composition is skewed to basic and acidic residues; the sequence is ATAKTEHSVE. Composition is skewed to acidic residues over residues 968-989 and 997-1016; these read AEGE…EAGE and IGDE…EHDE. Ser-1023 is modified (phosphoserine).

It localises to the nucleus. Acts as a transcriptional repressor. Plays roles in regulating gene expression and genome stability. The polypeptide is Paired amphipathic helix protein Sin3-like 2 (SNL2) (Arabidopsis thaliana (Mouse-ear cress)).